We begin with the raw amino-acid sequence, 120 residues long: NAD(P)H-quinone oxidoreductase subunit 3, chloroplastic (120 aa).

The next 3 membrane-spanning stretches (helical) occupy residues 9 to 29, 64 to 84, and 88 to 108; these read IFWAFLIISSLIPILAFLISG, MFALIFVVFDVETVFLYPWAM, and VLGVSVFLEAFLFVLILIVGS.

It belongs to the complex I subunit 3 family. In terms of assembly, NDH is composed of at least 16 different subunits, 5 of which are encoded in the nucleus.

The protein localises to the plastid. It localises to the chloroplast thylakoid membrane. The enzyme catalyses a plastoquinone + NADH + (n+1) H(+)(in) = a plastoquinol + NAD(+) + n H(+)(out). The catalysed reaction is a plastoquinone + NADPH + (n+1) H(+)(in) = a plastoquinol + NADP(+) + n H(+)(out). Functionally, NDH shuttles electrons from NAD(P)H:plastoquinone, via FMN and iron-sulfur (Fe-S) centers, to quinones in the photosynthetic chain and possibly in a chloroplast respiratory chain. The immediate electron acceptor for the enzyme in this species is believed to be plastoquinone. Couples the redox reaction to proton translocation, and thus conserves the redox energy in a proton gradient. In Phaseolus vulgaris (Kidney bean), this protein is NAD(P)H-quinone oxidoreductase subunit 3, chloroplastic.